The following is a 373-amino-acid chain: Ribosomal protein uL16 3-hydroxylase (373 aa).

The region spanning 92-219 (PTAALMRPFR…LISGFADYVL (128 aa)) is the JmjC domain. Residues Ser-114, 125 to 127 (HLD), Arg-140, and His-187 each bind substrate. The Fe cation site is built by His-125 and Asp-127. His-187 lines the Fe cation pocket.

This sequence belongs to the ROX family. RoxA/YcfD subfamily. Homodimer. It depends on Fe(2+) as a cofactor.

It catalyses the reaction L-arginyl-[ribosomal protein uL16] + 2-oxoglutarate + O2 = (3R)-3-hydroxy-L-arginyl-[ribosomal protein uL16] + succinate + CO2. Growth-regulating oxygenase that catalyzes the hydroxylation of ribosomal protein uL16 on 'Arg-81'. This Escherichia coli (strain K12) protein is Ribosomal protein uL16 3-hydroxylase (roxA).